We begin with the raw amino-acid sequence, 527 residues long: BTB/POZ domain-containing protein At4g01160 (527 aa).

A BTB domain is found at 111 to 180 (NNNTSVLSVQ…MYSNSLSVTA (70 aa)). A BACK domain is found at 233 to 327 (VKPLTNAARQ…HMTTDRLKKI (95 aa)).

Its pathway is protein modification; protein ubiquitination. May act as a substrate-specific adapter of an E3 ubiquitin-protein ligase complex (CUL3-RBX1-BTB) which mediates the ubiquitination and subsequent proteasomal degradation of target proteins. This chain is BTB/POZ domain-containing protein At4g01160, found in Arabidopsis thaliana (Mouse-ear cress).